A 607-amino-acid chain; its full sequence is Coronin-like protein cor-1 (607 aa).

WD repeat units follow at residues 77–117 (AHKA…LNRN), 127–167 (GHQK…ALLE), and 170–209 (GHPDQIWSINFNFDGSQFVTTCKDKKIRILDSHTGEVVHE). The disordered stretch occupies residues 415-564 (PTAAESVPTQ…VSAASDVGHV (150 aa)). Residues 424 to 436 (QSYSERPPSSQQP) are compositionally biased toward low complexity. Positions 437–447 (SPRPSASPRPR) are enriched in pro residues. 2 stretches are compositionally biased toward basic and acidic residues: residues 473–489 (SRTEIPPKEESKVDPMK) and 517–533 (AAAELERIKRDQSRTAD). Residues 544 to 559 (SSRASASPRGSVSAAS) show a composition bias toward low complexity. Residues 563 to 602 (HVPQNMDELLEDLMKMKAVLRQHERRIRMLEEEIADRNMS) are a coiled coil.

This sequence belongs to the WD repeat coronin family.

The protein resides in the cytoplasm. Its subcellular location is the cytoskeleton. Its function is as follows. Required to direct the migration of Q neuroblasts along the anterior axis of the body during larval development. This is dependent on its asymmetric expression in Q neuroblasts. This chain is Coronin-like protein cor-1 (cor-1), found in Caenorhabditis elegans.